The chain runs to 503 residues: Methylthioalkylmalate synthase 3, chloroplastic (503 aa).

The N-terminal 51 residues, 1 to 51 (MASLLLTSSSMITTSCRSMVLRSGLPIGSSFPSLRLTRPYDKATLFVSCCS), are a transit peptide targeting the chloroplast. The 275-residue stretch at 85–359 (VRVLDTTLRD…YTKIDSRQIM (275 aa)) folds into the Pyruvate carboxyltransferase domain.

This sequence belongs to the alpha-IPM synthase/homocitrate synthase family. It depends on Mn(2+) as a cofactor. Highly expressed in roots, leaves, and siliques. Lower amounts in stems and flowers.

It is found in the plastid. It localises to the chloroplast. The enzyme catalyses an omega-(methylsulfanyl)-2-oxoalkanoate + acetyl-CoA + H2O = a 2-(omega-methylsulfanyl)alkylmalate + CoA + H(+). Not activated by ATP. Its function is as follows. Determines the side chain length of aliphatic glucosinolate structures. Accepts all the omega-methylthio-2-oxoalkanoic acids needed to form the known C3 to C8 glucosinolates. Also able to convert pyruvate to citramalate, 2-oxoisovalerate to isopropylmalate, 4-methyl-2-oxopentanoate and 5-methyl-2-oxohexanoate for Leu-derived glucosinolates, 3-methyl-2-oxopentanoate for Ile-derived glucosinolates and phenylpyruvate to phenylethylglucosinolate. This Arabidopsis thaliana (Mouse-ear cress) protein is Methylthioalkylmalate synthase 3, chloroplastic (MAM3).